Reading from the N-terminus, the 880-residue chain is DNA double-strand break repair Rad50 ATPase (880 aa).

Residues R12, 32–38 (NGSGKSS), and Q138 contribute to the ATP site. 2 coiled-coil regions span residues 225-336 (GELE…VIKE) and 391-744 (GEVI…QALN). The 98-residue stretch at 397-494 (LESLEKERTE…NLRKLEIKLR (98 aa)) folds into the Zinc-hook domain. The Zn(2+) site is built by C442 and C445. Residue 789-794 (FLSGGE) coordinates ATP.

It belongs to the SMC family. RAD50 subfamily. As to quaternary structure, homodimer. Forms a heterotetramer composed of two Mre11 subunits and two Rad50 subunits. The cofactor is Zn(2+).

Part of the Rad50/Mre11 complex, which is involved in the early steps of DNA double-strand break (DSB) repair. The complex may facilitate opening of the processed DNA ends to aid in the recruitment of HerA and NurA. Rad50 controls the balance between DNA end bridging and DNA resection via ATP-dependent structural rearrangements of the Rad50/Mre11 complex. This is DNA double-strand break repair Rad50 ATPase from Pyrococcus abyssi (strain GE5 / Orsay).